A 439-amino-acid chain; its full sequence is Xylose isomerase (439 aa).

Active-site residues include H101 and D104. Mg(2+) contacts are provided by E232, E268, H271, D296, D307, D309, and D339.

Belongs to the xylose isomerase family. As to quaternary structure, homotetramer. Requires Mg(2+) as cofactor.

Its subcellular location is the cytoplasm. The catalysed reaction is alpha-D-xylose = alpha-D-xylulofuranose. The protein is Xylose isomerase of Photobacterium profundum (strain SS9).